A 626-amino-acid polypeptide reads, in one-letter code: DNA mismatch repair protein MutL (626 aa).

Residues 352–399 (QPPSPSFTSRPSSAGYASGSWHPAVSSPRTEWSPQTAHPAHRPLDLGA) form a disordered region. Over residues 378 to 387 (SPRTEWSPQT) the composition is skewed to polar residues.

The protein belongs to the DNA mismatch repair MutL/HexB family.

Functionally, this protein is involved in the repair of mismatches in DNA. It is required for dam-dependent methyl-directed DNA mismatch repair. May act as a 'molecular matchmaker', a protein that promotes the formation of a stable complex between two or more DNA-binding proteins in an ATP-dependent manner without itself being part of a final effector complex. The sequence is that of DNA mismatch repair protein MutL from Brucella anthropi (strain ATCC 49188 / DSM 6882 / CCUG 24695 / JCM 21032 / LMG 3331 / NBRC 15819 / NCTC 12168 / Alc 37) (Ochrobactrum anthropi).